The sequence spans 1164 residues: DNA-directed RNA polymerase subunit beta' (1164 aa).

Zn(2+) contacts are provided by Cys-60, Cys-62, Cys-75, and Cys-78. Residues Asp-449, Asp-451, and Asp-453 each coordinate Mg(2+). Zn(2+)-binding residues include Cys-776, Cys-850, Cys-857, and Cys-860.

The protein belongs to the RNA polymerase beta' chain family. The RNAP catalytic core consists of 2 alpha, 1 beta, 1 beta' and 1 omega subunit. When a sigma factor is associated with the core the holoenzyme is formed, which can initiate transcription. Mg(2+) is required as a cofactor. The cofactor is Zn(2+).

The catalysed reaction is RNA(n) + a ribonucleoside 5'-triphosphate = RNA(n+1) + diphosphate. Its function is as follows. DNA-dependent RNA polymerase catalyzes the transcription of DNA into RNA using the four ribonucleoside triphosphates as substrates. This is DNA-directed RNA polymerase subunit beta' from Moorella thermoacetica (strain ATCC 39073 / JCM 9320).